We begin with the raw amino-acid sequence, 736 residues long: Phosphoribosylformylglycinamidine synthase subunit PurL (736 aa).

Residue His-49 is part of the active site. 2 residues coordinate ATP: Tyr-52 and Lys-91. A Mg(2+)-binding site is contributed by Glu-93. Substrate contacts are provided by residues 94-97 (SHNH) and Arg-116. His-95 acts as the Proton acceptor in catalysis. Asp-117 contacts Mg(2+). A substrate-binding site is contributed by Gln-240. Position 268 (Asp-268) interacts with Mg(2+). 312–314 (ESQ) contributes to the substrate binding site. ATP-binding residues include Asp-493 and Gly-530. Position 531 (Asn-531) interacts with Mg(2+). Ser-533 serves as a coordination point for substrate.

It belongs to the FGAMS family. As to quaternary structure, monomer. Part of the FGAM synthase complex composed of 1 PurL, 1 PurQ and 2 PurS subunits.

It localises to the cytoplasm. It catalyses the reaction N(2)-formyl-N(1)-(5-phospho-beta-D-ribosyl)glycinamide + L-glutamine + ATP + H2O = 2-formamido-N(1)-(5-O-phospho-beta-D-ribosyl)acetamidine + L-glutamate + ADP + phosphate + H(+). The protein operates within purine metabolism; IMP biosynthesis via de novo pathway; 5-amino-1-(5-phospho-D-ribosyl)imidazole from N(2)-formyl-N(1)-(5-phospho-D-ribosyl)glycinamide: step 1/2. Its function is as follows. Part of the phosphoribosylformylglycinamidine synthase complex involved in the purines biosynthetic pathway. Catalyzes the ATP-dependent conversion of formylglycinamide ribonucleotide (FGAR) and glutamine to yield formylglycinamidine ribonucleotide (FGAM) and glutamate. The FGAM synthase complex is composed of three subunits. PurQ produces an ammonia molecule by converting glutamine to glutamate. PurL transfers the ammonia molecule to FGAR to form FGAM in an ATP-dependent manner. PurS interacts with PurQ and PurL and is thought to assist in the transfer of the ammonia molecule from PurQ to PurL. In Rhodopseudomonas palustris (strain ATCC BAA-98 / CGA009), this protein is Phosphoribosylformylglycinamidine synthase subunit PurL.